The following is a 263-amino-acid chain: HTH-type transcriptional repressor NanR (263 aa).

A disordered region spans residues 1 to 22; the sequence is MGLMNAFDSQTEDSSPAIGRNL. Residues 30-98 form the HTH gntR-type domain; it reads KKLSEMVEEE…NGERARVSRP (69 aa). The H-T-H motif DNA-binding region spans 58 to 77; that stretch reads ERELMAFFNVGRPSVREALA.

Belongs to the NanR family.

Transcriptional repressor that controls expression of the genes required for the catabolism of sialic acids. The chain is HTH-type transcriptional repressor NanR from Escherichia coli (strain 55989 / EAEC).